The following is a 198-amino-acid chain: FMN-dependent NADH:quinone oxidoreductase (198 aa).

FMN contacts are provided by residues S10, 16-18 (SQS), 94-97 (MYNF), and 138-141 (TRGG).

Belongs to the azoreductase type 1 family. Homodimer. Requires FMN as cofactor.

The enzyme catalyses 2 a quinone + NADH + H(+) = 2 a 1,4-benzosemiquinone + NAD(+). It catalyses the reaction N,N-dimethyl-1,4-phenylenediamine + anthranilate + 2 NAD(+) = 2-(4-dimethylaminophenyl)diazenylbenzoate + 2 NADH + 2 H(+). Functionally, quinone reductase that provides resistance to thiol-specific stress caused by electrophilic quinones. In terms of biological role, also exhibits azoreductase activity. Catalyzes the reductive cleavage of the azo bond in aromatic azo compounds to the corresponding amines. This chain is FMN-dependent NADH:quinone oxidoreductase, found in Shewanella oneidensis (strain ATCC 700550 / JCM 31522 / CIP 106686 / LMG 19005 / NCIMB 14063 / MR-1).